Here is a 162-residue protein sequence, read N- to C-terminus: Photosystem II extrinsic protein V (162 aa).

The N-terminal stretch at 1 to 26 (MLKRYMLLAVATVFFAFQVLTSTATA) is a signal peptide. Heme c-binding residues include C62, C65, H66, and H117.

Belongs to the cytochrome c family. PsbV subfamily. As to quaternary structure, PSII is composed of 1 copy each of membrane proteins PsbA, PsbB, PsbC, PsbD, PsbE, PsbF, PsbH, PsbI, PsbJ, PsbK, PsbL, PsbM, PsbT, PsbX, PsbY, PsbZ, Psb30/Ycf12, peripheral proteins PsbO, CyanoQ (PsbQ), PsbU, PsbV and a large number of cofactors. It forms dimeric complexes. Heme c is required as a cofactor.

It is found in the cellular thylakoid membrane. Its function is as follows. One of the extrinsic, lumenal subunits of photosystem II (PSII). PSII is a light-driven water plastoquinone oxidoreductase, using light energy to abstract electrons from H(2)O, generating a proton gradient subsequently used for ATP formation. The extrinsic proteins stabilize the structure of photosystem II oxygen-evolving complex (OEC), the ion environment of oxygen evolution and protect the OEC against heat-induced inactivation. Low-potential cytochrome c that plays a role in the OEC of PSII. The protein is Photosystem II extrinsic protein V of Acaryochloris marina (strain MBIC 11017).